A 32-amino-acid polypeptide reads, in one-letter code: Natriuretic peptide Coa_NP1 (32 aa).

A disulfide bridge connects residues C8 and C24.

It belongs to the natriuretic peptide family. Snake NP subfamily. Expressed by the venom gland.

It localises to the secreted. In terms of biological role, snake venom natriuretic peptide that exhibits hypotensive and vasodepressor activity in rats. The protein is Natriuretic peptide Coa_NP1 of Crotalus lutosus abyssus (Grand Canyon rattlesnake).